A 309-amino-acid chain; its full sequence is Electron transfer flavoprotein subunit alpha (309 aa).

An FAD-binding site is contributed by Leu253–Asp281.

This sequence belongs to the ETF alpha-subunit/FixB family. As to quaternary structure, heterodimer of an alpha and a beta subunit. FAD serves as cofactor.

Its function is as follows. The electron transfer flavoprotein serves as a specific electron acceptor for other dehydrogenases. It transfers the electrons to the main respiratory chain via ETF-ubiquinone oxidoreductase (ETF dehydrogenase). This Pseudomonas aeruginosa (strain ATCC 15692 / DSM 22644 / CIP 104116 / JCM 14847 / LMG 12228 / 1C / PRS 101 / PAO1) protein is Electron transfer flavoprotein subunit alpha (etfA).